Consider the following 787-residue polypeptide: MKFKYCAIFFSGFLGLSAILAACGARGKFDQVDDGKIKLAFSLTSKSASNALQAIVKKYNEVKKPGDYHIEITQIAGGYDGGRSDLQTRVNVKDTTNFYNLILNYPDLVSTLGRVGMELLFDKVNTDKLSDRFLDFNKRISAISKPGIYGIPVSLSTEVLSINGPVLHYILKSAKGDSDNVKVSQRTGETTQKSKVTNPLKINTQNDPATKDLWEKIEASAKANGKSNKDGQTKGKKKVEKSSSSSLVNLKQSTDQTTTDDGSQKSDNKIKESWGEYQEVDGGLKNFEFKASIFENWHDLLDFSTRVAKSFTNVKGKDIKKGTDIQGVLGVDSTPNSLFTSVFAAGGGDYNNFFYKIENGRADFSNFKNKGTSYQNLQKVFGDFKGLIDKNGIFVNKGGSYSSNFQKFHQLAYSISSTSGFFYSFAGNSAKRLKFGDNFIEFPRFTQEIKAPSTENGGQSNLLGTFEVKDSSKSKEVKKTNRKEDGAQNQGKKESDKKTIYLYKSQIPSDKTEGENAILIKEQNVINQLEQAAKKDEKGETVTNKVASLETKAANAKKDSSKTIIGYTTTDNVHEDGKNIFKINKLKTEDYDRKIIVGATEEVLEQSSTLQSDEAIVLPAPGKYQSGDAKKVTITQGPNIIGIHANEKENAETQKFVNWFLNNTESWEVKNGKDSSTKQQTAAEFFAESASYILPLKEIFDKDNKKATENKDNNTSNKKQANTYAEKALDLFQQISKGDIVSYSDPSDFRSGKFRDGIGSNFNAAVSSKADFDRFVKGFIATLGSEI.

Residues 1 to 22 (MKFKYCAIFFSGFLGLSAILAA) form the signal peptide. Cysteine 23 carries the N-palmitoyl cysteine lipid modification. Cysteine 23 carries the S-diacylglycerol cysteine lipid modification. 2 disordered regions span residues 178–270 (SDNV…DNKI) and 473–495 (KSKEVKKTNRKEDGAQNQGKKES). A compositionally biased stretch (polar residues) spans 181–208 (VKVSQRTGETTQKSKVTNPLKINTQNDP). Residues 209 to 219 (ATKDLWEKIEA) are compositionally biased toward basic and acidic residues. Residues 242-261 (SSSSSLVNLKQSTDQTTTDD) show a composition bias toward low complexity.

The protein belongs to the MG185/MG260 family.

It is found in the cell membrane. This is an uncharacterized protein from Mycoplasma pneumoniae (strain ATCC 29342 / M129 / Subtype 1) (Mycoplasmoides pneumoniae).